A 203-amino-acid polypeptide reads, in one-letter code: MSAIAPGMILFAYLCGSISSAILVCRIAGLPDPRESGSGNPGATNVLRIGGKGAAVAVLIFDILKGMLPVWGAYALGVTPFWLGLIAIAACLGHIWPVFFGFKGGKGVATAFGAIAPIGWDLTGVMAGTWLLTVLLSGYSSLGAIVSALIAPFYVWWFKPQFTFPVSMLSCLILLRHHDNIQRLWRRQETKIWTKLKKKRQKD.

Topologically, residues 1–3 are periplasmic; that stretch reads MSA. Residues 4 to 24 form a helical membrane-spanning segment; the sequence is IAPGMILFAYLCGSISSAILV. Topologically, residues 25–52 are cytoplasmic; the sequence is CRIAGLPDPRESGSGNPGATNVLRIGGK. Residues 53–73 traverse the membrane as a helical segment; the sequence is GAAVAVLIFDILKGMLPVWGA. Topologically, residues 74–80 are periplasmic; sequence YALGVTP. The chain crosses the membrane as a helical span at residues 81-101; sequence FWLGLIAIAACLGHIWPVFFG. Over 102 to 111 the chain is Cytoplasmic; it reads FKGGKGVATA. Residues 112–132 form a helical membrane-spanning segment; the sequence is FGAIAPIGWDLTGVMAGTWLL. At 133–137 the chain is on the periplasmic side; sequence TVLLS. Residues 138–158 form a helical membrane-spanning segment; it reads GYSSLGAIVSALIAPFYVWWF. Residues 159-203 are Cytoplasmic-facing; sequence KPQFTFPVSMLSCLILLRHHDNIQRLWRRQETKIWTKLKKKRQKD.

This sequence belongs to the PlsY family. Probably interacts with PlsX.

Its subcellular location is the cell inner membrane. It catalyses the reaction sn-glycerol 3-phosphate + an acyl-CoA = a 1-acyl-sn-glycero-3-phosphate + CoA. It carries out the reaction a fatty acyl-[ACP] + sn-glycerol 3-phosphate = a 1-acyl-sn-glycero-3-phosphate + holo-[ACP]. The protein operates within lipid metabolism; phospholipid metabolism. Its function is as follows. Catalyzes the transfer of an acyl group from acyl-ACP to glycerol-3-phosphate (G3P) to form lysophosphatidic acid (LPA). This enzyme can also utilize acyl-CoA as fatty acyl donor, but not acyl-PO(4). This is Glycerol-3-phosphate acyltransferase from Salmonella agona (strain SL483).